A 133-amino-acid chain; its full sequence is Large ribosomal subunit protein uL16 (133 aa).

Belongs to the universal ribosomal protein uL16 family. Part of the 50S ribosomal subunit.

Binds 23S rRNA and is also seen to make contacts with the A and possibly P site tRNAs. This is Large ribosomal subunit protein uL16 from Blochmanniella floridana.